The sequence spans 551 residues: Formate--tetrahydrofolate ligase (551 aa).

Thr65–Thr72 lines the ATP pocket.

This sequence belongs to the formate--tetrahydrofolate ligase family.

The enzyme catalyses (6S)-5,6,7,8-tetrahydrofolate + formate + ATP = (6R)-10-formyltetrahydrofolate + ADP + phosphate. It participates in one-carbon metabolism; tetrahydrofolate interconversion. The sequence is that of Formate--tetrahydrofolate ligase from Thermosipho africanus (strain TCF52B).